Reading from the N-terminus, the 912-residue chain is Probable dipeptidyl-aminopeptidase B (912 aa).

Positions 1–25 are enriched in basic and acidic residues; it reads MAAEKGESSDEERKPLTRDSMEYRD. Disordered regions lie at residues 1-31 and 49-70; these read MAAE…NSLH and GSTH…SDDG. The Cytoplasmic segment spans residues 1–92; the sequence is MAAEKGESSD…GGKPVQKKVK (92 aa). Residues 93–113 traverse the membrane as a helical; Signal-anchor for type II membrane protein segment; that stretch reads IVLGFLLFLCLSGWSLSFVLF. Over 114–912 the chain is Vacuolar; sequence LFGGHESSKT…RAAIWVGLSI (799 aa). N-linked (GlcNAc...) asparagine glycosylation is found at asparagine 130, asparagine 210, asparagine 346, asparagine 569, and asparagine 656. Serine 751 (charge relay system) is an active-site residue. A glycan (N-linked (GlcNAc...) asparagine) is linked at asparagine 810. Catalysis depends on charge relay system residues aspartate 828 and histidine 861. N-linked (GlcNAc...) asparagine glycosylation occurs at asparagine 897.

Belongs to the peptidase S9B family.

Its subcellular location is the vacuole membrane. It carries out the reaction Release of an N-terminal dipeptide, Xaa-Yaa-|-Zaa-, from a polypeptide, preferentially when Yaa is Pro, provided Zaa is neither Pro nor hydroxyproline.. In terms of biological role, type IV dipeptidyl-peptidase which removes N-terminal dipeptides sequentially from polypeptides having unsubstituted N-termini provided that the penultimate residue is proline. This is Probable dipeptidyl-aminopeptidase B (DAPB) from Paracoccidioides lutzii (strain ATCC MYA-826 / Pb01) (Paracoccidioides brasiliensis).